Consider the following 429-residue polypeptide: 3-phosphoshikimate 1-carboxyvinyltransferase (429 aa).

The 3-phosphoshikimate site is built by Lys-22, Ser-23, and Arg-27. Lys-22 provides a ligand contact to phosphoenolpyruvate. Phosphoenolpyruvate is bound by residues Gly-93 and Arg-122. 3-phosphoshikimate-binding residues include Ser-168, Ser-169, Gln-170, Ser-196, Asp-311, and Lys-338. Phosphoenolpyruvate is bound at residue Gln-170. Asp-311 acts as the Proton acceptor in catalysis. Phosphoenolpyruvate contacts are provided by Arg-342 and Arg-384.

It belongs to the EPSP synthase family. Monomer.

The protein resides in the cytoplasm. It carries out the reaction 3-phosphoshikimate + phosphoenolpyruvate = 5-O-(1-carboxyvinyl)-3-phosphoshikimate + phosphate. Its pathway is metabolic intermediate biosynthesis; chorismate biosynthesis. Catalyzes the transfer of the enolpyruvyl moiety of phosphoenolpyruvate (PEP) to the 5-hydroxyl of shikimate-3-phosphate (S3P) to produce enolpyruvyl shikimate-3-phosphate and inorganic phosphate. The protein is 3-phosphoshikimate 1-carboxyvinyltransferase of Methanocaldococcus jannaschii (strain ATCC 43067 / DSM 2661 / JAL-1 / JCM 10045 / NBRC 100440) (Methanococcus jannaschii).